The sequence spans 207 residues: Phosphatidylinositol phosphate synthase (207 aa).

Helical transmembrane passes span 21–44 (LRAHVTPDVVTWIGTIGAVLMALI) and 50–67 (WLWQGPWLVTLFIFSDSL). 28–31 (DVVT) is a binding site for a CDP-1,2-diacyl-sn-glycerol. Mg(2+) contacts are provided by Asp65 and Asp68. Residues Gly69, Arg73, and Ser79 each contribute to the a CDP-1,2-diacyl-sn-glycerol site. 2 residues coordinate Mg(2+): Asp86 and Asp90. A run of 4 helical transmembrane segments spans residues 88 to 106 (TLDRFGDAAIFTGVALYFA), 112 to 131 (VLWTAMACAALVFGMATSYV), 152 to 170 (RLLVSLVAIEITGLARVGA), and 176 to 195 (VVALPIALCYLTLAGAITVV). The active-site Proton acceptor is the Asp90.

The protein belongs to the CDP-alcohol phosphatidyltransferase class-I family. Homodimer. Requires Mg(2+) as cofactor.

The protein localises to the cell membrane. The enzyme catalyses a CDP-1,2-diacyl-sn-glycerol + 1D-myo-inositol 3-phosphate = a 1,2-diacyl-sn-glycero-3-phospho-(1D-myo-inositol-3-phosphate) + CMP + H(+). It catalyses the reaction 1,2-di-(9Z-octadecenoyl)-sn-glycero-3-cytidine-5'-diphosphate + 1D-myo-inositol 3-phosphate = 1,2-di-(9Z-octadecenoyl)-sn-glycero-3-phospho-(1D-myo-inositol-3-phosphate) + CMP + H(+). It participates in phospholipid metabolism; phosphatidylinositol phosphate biosynthesis. Catalyzes the conjugation of the 1'-hydroxyl group of D-myo-inositol-3-phosphate (also named L-myo-inositol-1-phosphate) with a lipid tail of cytidine diphosphate diacylglycerol (CDP-DAG), forming phosphatidylinositol phosphate (PIP) and CMP. PIP is a precursor of phosphatidylinositol (PI) which is an essential lipid required for cell wall formation. This chain is Phosphatidylinositol phosphate synthase, found in Cutibacterium acnes (strain DSM 16379 / KPA171202) (Propionibacterium acnes).